A 728-amino-acid chain; its full sequence is MSSQASQRSSSTSAVAQKTRERRKSKSRRRCWFGCLWLSSRVSLIRSSSRFSRSPEPDESLTAIDKVMSIINEKPLKMAHILKTARFVNDVSFSERKQFVECGVIHHLLELIGETAISDFSASSRSADEQKRRARRNSSASLSHKGTGYGTGSTRSRWDIERTVEEKLIREEHLTWLLSILNSFMLGWPTTDNLKTKPEELVHMTEIAIKLIADSSVLSILEYNLRNDSFFDVSEHIEIYQALLETAASMAATPGLVPFLVRPYTSSAKSIAKELIPRFKENILSIQARWGGTLEETNFRMAEFTAKVTLLSDYVINAARAYEQTLPPEQRIQTATHRRPSHSGLHSKMQGPKDDETIYKNKMQELQLQTAKFIGDFGKLCVPYVFRKEAKNINPFSPHLRDRTKRIAKELASIANALPLNASNSIYVCYDEGRVDIIKVLISGPDDTPYANGLFEFDIFFPTGYPFSPPKCAFLTTGSGNVRFNPNLYNDGKICLSILGTWEGRPEEKWNPYCSLMQVLVSIQGLIFVKDPYFNEPGFERYQGTDRGDEYSRKYNLQIEHATLNYAIREQLKKPSEHFKEVIEKHLWLKREAILKQAQAWIDNVSNDFGDDKMSKRKDVFAFETGFNPATQERVIHNLIQELQAMQSPFAKEEAEESERLKREQSEKEEKQKKEAAALAEIEREKRELELDFQRRRSSVLATHVAVIRTQPTGDYSVPSVNEPSTSS.

Low complexity predominate over residues 1–17 (MSSQASQRSSSTSAVAQ). 2 disordered regions span residues 1 to 23 (MSSQASQRSSSTSAVAQKTRERR) and 123 to 155 (SSRSADEQKRRARRNSSASLSHKGTGYGTGSTR). The region spanning 402-568 (DRTKRIAKEL…IEHATLNYAI (167 aa)) is the UBC core domain. The active-site Glycyl thioester intermediate is C495. 2 disordered regions span residues 649–678 (PFAKEEAEESERLKREQSEKEEKQKKEAAA) and 709–728 (RTQPTGDYSVPSVNEPSTSS). Residues 658 to 678 (SERLKREQSEKEEKQKKEAAA) are compositionally biased toward basic and acidic residues. Positions 710 to 728 (TQPTGDYSVPSVNEPSTSS) are enriched in polar residues.

Belongs to the ubiquitin-conjugating enzyme family.

This chain is Probable ubiquitin-conjugating enzyme protein 17 (ubc-17), found in Caenorhabditis elegans.